The following is a 149-amino-acid chain: MQVILLDKIGNLGSLGDTVNVKSGYARNFLIPQGKAVMATKANVAMFESRRAELEAKVAEQLAAAQTRADQVNALEAVVIASKAGDEGKLFGSIGTRDIADAITAAGVKVSKSEVRLPEGALRNVGAYEVSVQLHSEVFATAKVQVVAE.

It belongs to the bacterial ribosomal protein bL9 family.

Binds to the 23S rRNA. This chain is Large ribosomal subunit protein bL9, found in Vibrio cholerae serotype O1 (strain ATCC 39541 / Classical Ogawa 395 / O395).